The primary structure comprises 227 residues: 2,3-bisphosphoglycerate-dependent phosphoglycerate mutase (227 aa).

Substrate is bound by residues 7–14 (RHGQSEWN), 20–21 (TG), R59, 86–89 (ERHY), K97, 113–114 (RR), and 182–183 (GN). H8 functions as the Tele-phosphohistidine intermediate in the catalytic mechanism. Residue E86 is the Proton donor/acceptor of the active site.

The protein belongs to the phosphoglycerate mutase family. BPG-dependent PGAM subfamily. In terms of assembly, homodimer.

It carries out the reaction (2R)-2-phosphoglycerate = (2R)-3-phosphoglycerate. Its pathway is carbohydrate degradation; glycolysis; pyruvate from D-glyceraldehyde 3-phosphate: step 3/5. In terms of biological role, catalyzes the interconversion of 2-phosphoglycerate and 3-phosphoglycerate. This is 2,3-bisphosphoglycerate-dependent phosphoglycerate mutase from Neisseria meningitidis serogroup C / serotype 2a (strain ATCC 700532 / DSM 15464 / FAM18).